Consider the following 360-residue polypeptide: Flavin-dependent trigonelline monooxygenase, oxygenase component (360 aa).

Belongs to the bacterial luciferase oxidoreductase family. As to quaternary structure, homodimer. The trigonelline monooxygenase is composed of a reductase component TgnA and an oxygenase component TgnB.

The catalysed reaction is N-methylnicotinate + FMNH2 + O2 = (Z)-2-((N-methylformamido)methylene)-5-hydroxybutanolactone + FMN + H(+). It carries out the reaction N-methylnicotinate + FADH2 + O2 = (Z)-2-((N-methylformamido)methylene)-5-hydroxybutanolactone + FAD + H(+). Its function is as follows. Involved in the degradation of the pyridine ring of trigonelline (TG; N-methylnicotinate) into succinate and methylamine as carbon and nitrogen sources, respectively. Catalyzes the insertion of two oxygens, followed by a ring cleavage of trigonelline to yield (Z)-2-((N-methylformamido)methylene)-5-hydroxybutyrolactone (MFMB). It is able to use reduced FMN or FAD. The polypeptide is Flavin-dependent trigonelline monooxygenase, oxygenase component (Acinetobacter baylyi (strain ATCC 33305 / BD413 / ADP1)).